A 241-amino-acid polypeptide reads, in one-letter code: Small ribosomal subunit protein uS3 (241 aa).

One can recognise a KH type-2 domain in the interval 39-107; the sequence is IREVLMKNLK…EVVINIVEVR (69 aa). Positions 219–241 are disordered; that stretch reads MAELDHAGGGGGGERRRRERDAA. Basic and acidic residues predominate over residues 231-241; that stretch reads GERRRRERDAA.

This sequence belongs to the universal ribosomal protein uS3 family. Part of the 30S ribosomal subunit. Forms a tight complex with proteins S10 and S14.

Functionally, binds the lower part of the 30S subunit head. Binds mRNA in the 70S ribosome, positioning it for translation. This Beijerinckia indica subsp. indica (strain ATCC 9039 / DSM 1715 / NCIMB 8712) protein is Small ribosomal subunit protein uS3.